The primary structure comprises 80 residues: UPF0180 protein GK1051 (80 aa).

This sequence belongs to the UPF0180 family.

The protein is UPF0180 protein GK1051 of Geobacillus kaustophilus (strain HTA426).